Here is a 381-residue protein sequence, read N- to C-terminus: Bifunctional enzyme Fae/Hps (381 aa).

The segment at 1-150 is formaldehyde-activating enzyme; the sequence is MIKFGEAVLG…KEKYRALHPL (150 aa). A 3-hexulose-6-phosphate synthase region spans residues 151–381; that stretch reads VGFRDVRLEY…DEDEDIGEEL (231 aa).

It in the N-terminal section; belongs to the formaldehyde-activating enzyme family. This sequence in the C-terminal section; belongs to the HPS/KGPDC family. HPS subfamily.

It carries out the reaction 5,6,7,8-tetrahydromethanopterin + formaldehyde = 5,10-methylenetetrahydromethanopterin + H2O. The catalysed reaction is D-ribulose 5-phosphate + formaldehyde = D-arabino-hex-3-ulose 6-phosphate. Its pathway is carbohydrate biosynthesis; D-ribose 5-phosphate biosynthesis. In terms of biological role, catalyzes the condensation of formaldehyde with tetrahydromethanopterin (H(4)MPT) to 5,10-methylenetetrahydromethanopterin. Catalyzes the reversible formation of ribulose-5-phosphate and formaldehyde from 3-hexulose-6-phosphate. The chain is Bifunctional enzyme Fae/Hps from Methanocaldococcus jannaschii (strain ATCC 43067 / DSM 2661 / JAL-1 / JCM 10045 / NBRC 100440) (Methanococcus jannaschii).